A 215-amino-acid chain; its full sequence is Cytochrome b6 (215 aa).

The chain crosses the membrane as a helical span at residues I32 to F52. C35 is a heme c binding site. Heme b is bound by residues H86 and H100. 3 helical membrane-spanning segments follow: residues A90–F110, L116–Y136, and L186–I206. Heme b contacts are provided by H187 and H202.

Belongs to the cytochrome b family. PetB subfamily. In terms of assembly, the 4 large subunits of the cytochrome b6-f complex are cytochrome b6, subunit IV (17 kDa polypeptide, PetD), cytochrome f and the Rieske protein, while the 4 small subunits are PetG, PetL, PetM and PetN. The complex functions as a dimer. Requires heme b as cofactor. Heme c is required as a cofactor.

The protein localises to the plastid. It localises to the chloroplast thylakoid membrane. In terms of biological role, component of the cytochrome b6-f complex, which mediates electron transfer between photosystem II (PSII) and photosystem I (PSI), cyclic electron flow around PSI, and state transitions. In Physcomitrium patens (Spreading-leaved earth moss), this protein is Cytochrome b6.